Here is a 485-residue protein sequence, read N- to C-terminus: GTPase Obg (485 aa).

The Obg domain occupies Ser-2–Val-159. Residues Pro-64–Gly-84 are disordered. The OBG-type G domain maps to Ala-160–Arg-340. Residues Gly-166–Ser-173, Phe-191–Val-195, Asp-212–Gly-215, Asn-292–Asp-295, and Ser-321–Val-323 contribute to the GTP site. Residues Ser-173 and Thr-193 each contribute to the Mg(2+) site. The OCT domain occupies Pro-358–Pro-438. Residues Leu-457 to Lys-469 show a composition bias toward basic and acidic residues. The tract at residues Leu-457 to Arg-485 is disordered.

It belongs to the TRAFAC class OBG-HflX-like GTPase superfamily. OBG GTPase family. Monomer. Mg(2+) is required as a cofactor.

The protein localises to the cytoplasm. Its function is as follows. An essential GTPase which binds GTP, GDP and possibly (p)ppGpp with moderate affinity, with high nucleotide exchange rates and a fairly low GTP hydrolysis rate. Plays a role in control of the cell cycle, stress response, ribosome biogenesis and in those bacteria that undergo differentiation, in morphogenesis control. In Nocardia farcinica (strain IFM 10152), this protein is GTPase Obg.